The following is a 447-amino-acid chain: Tyrosine aminotransferase (447 aa).

Position 273 is an N6-(pyridoxal phosphate)lysine (K273). Residue S441 is modified to Phosphoserine.

Belongs to the class-I pyridoxal-phosphate-dependent aminotransferase family. Homodimer. Pyridoxal 5'-phosphate is required as a cofactor.

It catalyses the reaction L-tyrosine + 2-oxoglutarate = 3-(4-hydroxyphenyl)pyruvate + L-glutamate. Its pathway is amino-acid degradation; L-phenylalanine degradation; acetoacetate and fumarate from L-phenylalanine: step 2/6. Functionally, transaminase involved in tyrosine breakdown. Converts tyrosine to p-hydroxyphenylpyruvate. Can catalyze the reverse reaction, using glutamic acid, with 2-oxoglutarate as cosubstrate (in vitro). Has much lower affinity and transaminase activity for phenylalanine. The protein is Tyrosine aminotransferase (TAT) of Bos taurus (Bovine).